Consider the following 100-residue polypeptide: Small ribosomal subunit protein uS14c (100 aa).

The protein belongs to the universal ribosomal protein uS14 family. In terms of assembly, part of the 30S ribosomal subunit.

The protein resides in the plastid. Its subcellular location is the chloroplast. Its function is as follows. Binds 16S rRNA, required for the assembly of 30S particles. This Citrus sinensis (Sweet orange) protein is Small ribosomal subunit protein uS14c.